A 1342-amino-acid chain; its full sequence is DNA-directed RNA polymerase subunit beta (1342 aa).

It belongs to the RNA polymerase beta chain family. In terms of assembly, the RNAP catalytic core consists of 2 alpha, 1 beta, 1 beta' and 1 omega subunit. When a sigma factor is associated with the core the holoenzyme is formed, which can initiate transcription.

The enzyme catalyses RNA(n) + a ribonucleoside 5'-triphosphate = RNA(n+1) + diphosphate. Functionally, DNA-dependent RNA polymerase catalyzes the transcription of DNA into RNA using the four ribonucleoside triphosphates as substrates. This is DNA-directed RNA polymerase subunit beta from Vibrio parahaemolyticus serotype O3:K6 (strain RIMD 2210633).